The primary structure comprises 500 residues: Putative glucokinase-2 (500 aa).

Position 2 is an N-acetylserine (Ser-2). A Phosphoserine modification is found at Ser-2. Residues 12-498 (EALEDAVVEI…SGVGAALCAL (487 aa)) form the Hexokinase domain. Residues 74–217 (NGTERGVLLA…LSMINVVALT (144 aa)) form a hexokinase small subdomain region. An ATP-binding site is contributed by Lys-110. Residues 159–185 (KMGFTFSYPVDQTSLSSGTLIRWTKSF) are glucose-binding. Positions 218–487 (NDTVGTFLSH…RKIHLRLAKD (270 aa)) are hexokinase large subdomain. Ser-470 carries the phosphoserine modification. Residue 487–492 (DGSGVG) participates in ATP binding.

Belongs to the hexokinase family.

It localises to the cytoplasm. It catalyses the reaction D-glucose + ATP = D-glucose 6-phosphate + ADP + H(+). It participates in carbohydrate degradation; glycolysis; D-glyceraldehyde 3-phosphate and glycerone phosphate from D-glucose: step 1/4. Functionally, putative glucokinase involved in phosphorylation of aldohexoses and glucose uptake. Involved in sporulation. Required for the full activation of the early meiotic inducer IME1. In Saccharomyces cerevisiae (strain ATCC 204508 / S288c) (Baker's yeast), this protein is Putative glucokinase-2 (EMI2).